The primary structure comprises 388 residues: Succinate--CoA ligase [ADP-forming] subunit beta (388 aa).

The 236-residue stretch at 9-244 (KQLFKEYGLP…PSQEDAREAH (236 aa)) folds into the ATP-grasp domain. ATP is bound by residues Lys46, 53 to 55 (GRG), Glu99, Thr102, and Glu107. Mg(2+)-binding residues include Asn199 and Asp213. Residues Asn264 and 321-323 (GIV) contribute to the substrate site.

Belongs to the succinate/malate CoA ligase beta subunit family. Heterotetramer of two alpha and two beta subunits. The cofactor is Mg(2+).

It catalyses the reaction succinate + ATP + CoA = succinyl-CoA + ADP + phosphate. It carries out the reaction GTP + succinate + CoA = succinyl-CoA + GDP + phosphate. The protein operates within carbohydrate metabolism; tricarboxylic acid cycle; succinate from succinyl-CoA (ligase route): step 1/1. Functionally, succinyl-CoA synthetase functions in the citric acid cycle (TCA), coupling the hydrolysis of succinyl-CoA to the synthesis of either ATP or GTP and thus represents the only step of substrate-level phosphorylation in the TCA. The beta subunit provides nucleotide specificity of the enzyme and binds the substrate succinate, while the binding sites for coenzyme A and phosphate are found in the alpha subunit. The sequence is that of Succinate--CoA ligase [ADP-forming] subunit beta from Alteromonas mediterranea (strain DSM 17117 / CIP 110805 / LMG 28347 / Deep ecotype).